We begin with the raw amino-acid sequence, 748 residues long: Polyribonucleotide nucleotidyltransferase (748 aa).

Positions 487 and 493 each coordinate Mg(2+). The KH domain occupies 554–613; it reads PSTTTIKIDKDKIRDIIGPGGKVIKEICETSGAKIDISDDGTVSVYASDRDKLKVALDKI. The region spanning 623 to 691 is the S1 motif domain; that stretch reads GEIFNGTVVK…NKGKAKLTIK (69 aa). A disordered region spans residues 691 to 748; the sequence is KNADKDKSSNNTKPKTNVNNTKDNSEPEQRRDSSKKRAWNEDNNAETAEVITERKYFN. A compositionally biased stretch (low complexity) spans 699–712; sequence SNNTKPKTNVNNTK. Residues 713–722 are compositionally biased toward basic and acidic residues; the sequence is DNSEPEQRRD.

It belongs to the polyribonucleotide nucleotidyltransferase family. Mg(2+) is required as a cofactor.

It localises to the cytoplasm. The catalysed reaction is RNA(n+1) + phosphate = RNA(n) + a ribonucleoside 5'-diphosphate. Involved in mRNA degradation. Catalyzes the phosphorolysis of single-stranded polyribonucleotides processively in the 3'- to 5'-direction. This is Polyribonucleotide nucleotidyltransferase from Rickettsia africae (strain ESF-5).